Here is a 304-residue protein sequence, read N- to C-terminus: MRINHNIAALNTLNRLSSNNSASQKNMEKLSSGLRINRAGDDAAGLAISEKMRGQIRGLEMASKNSQDGISLIQTAEGALTETHAILQRVRELVVQAGNTGTQDKATDLQSIQDEISALTDEIDGISNRTEFNGKKLLDGTYKVDTATPANQKNLVFQIGANATQQISVNIEDMGADALGIKEADGSIAALHSVNDLDVTKFADNAADTADIGFDAQLKVVDEAINQVSSQRAKLGAVQNRLEHTINNLSASGENLTAAESRIRDVDMAKEMSEFTKNNILSQASQAMLAQANQQPQNVLQLLR.

It belongs to the bacterial flagellin family. In terms of assembly, interacts with FliW in a 1:1 complex. Forms a 3-way complex of Hag, FliS and FliW, in which Flis and FliW do not directly interact.

The protein resides in the secreted. Its subcellular location is the bacterial flagellum. It localises to the cell wall. In terms of biological role, flagellin is the subunit which polymerizes to form the filaments of bacterial flagella. Assembly into flagella requires FliW. Acts as a homeostatic autoinhibitory regulator to control its own cytoplasmic levels. Partner switching by flagellin between FliW and CsrA provides a flagellar assembly checkpoint to tightly control the timing of flagellin synthesis. Flagellin binds to assembly factor FliW, freeing translation regulator CsrA to repress translation of the flagellin mRNA. When the flagellar hook is assembled flagellin is secreted, depleting intracellular flagellin, which frees FliW to interact with CsrA. This derepresses flagellin translation and provides protein for flagellar assembly. Once the flagellar filament is completed cytoplasmic flagellin levels rise and CsrA translation repression of flagellin reinitiates. The chain is Flagellin from Bacillus subtilis (strain 168).